Consider the following 296-residue polypeptide: Probable endonuclease 4 (296 aa).

Residues histidine 68, histidine 109, glutamate 144, aspartate 178, histidine 181, histidine 213, aspartate 226, histidine 228, and glutamate 258 each contribute to the Zn(2+) site.

It belongs to the AP endonuclease 2 family. Requires Zn(2+) as cofactor.

The catalysed reaction is Endonucleolytic cleavage to 5'-phosphooligonucleotide end-products.. In terms of biological role, endonuclease IV plays a role in DNA repair. It cleaves phosphodiester bonds at apurinic or apyrimidinic (AP) sites, generating a 3'-hydroxyl group and a 5'-terminal sugar phosphate. This Staphylococcus carnosus (strain TM300) protein is Probable endonuclease 4.